A 101-amino-acid polypeptide reads, in one-letter code: MMLEHVLVLSAYLFSIGIYGLITSRNMVRALMCLELILNAVNLNFVTFSDFFDSRQLKGNIFSIFVIAIAAAEAAIGPAIVSAIYRNRKSIHINQSNLLNK.

3 helical membrane-spanning segments follow: residues 2 to 22 (MLEH…YGLI), 32 to 52 (MCLE…SDFF), and 61 to 81 (IFSI…PAIV).

The protein belongs to the complex I subunit 4L family. NDH is composed of at least 16 different subunits, 5 of which are encoded in the nucleus.

The protein localises to the plastid. Its subcellular location is the chloroplast thylakoid membrane. The catalysed reaction is a plastoquinone + NADH + (n+1) H(+)(in) = a plastoquinol + NAD(+) + n H(+)(out). It carries out the reaction a plastoquinone + NADPH + (n+1) H(+)(in) = a plastoquinol + NADP(+) + n H(+)(out). Functionally, NDH shuttles electrons from NAD(P)H:plastoquinone, via FMN and iron-sulfur (Fe-S) centers, to quinones in the photosynthetic chain and possibly in a chloroplast respiratory chain. The immediate electron acceptor for the enzyme in this species is believed to be plastoquinone. Couples the redox reaction to proton translocation, and thus conserves the redox energy in a proton gradient. This chain is NAD(P)H-quinone oxidoreductase subunit 4L, chloroplastic, found in Manihot esculenta (Cassava).